Reading from the N-terminus, the 333-residue chain is Coiled-coil domain-containing protein 68 (333 aa).

Coiled coils occupy residues L86–A120 and E160–E302.

Interacts with CEP170.

Its subcellular location is the cytoplasm. It localises to the cytoskeleton. It is found in the microtubule organizing center. The protein localises to the centrosome. The protein resides in the centriole. In terms of biological role, centriolar protein required for centriole subdistal appendage assembly and microtubule anchoring in interphase cells. Together with CCDC120, cooperate with subdistal appendage components ODF2, NIN and CEP170 for hierarchical subdistal appendage assembly. The sequence is that of Coiled-coil domain-containing protein 68 (Ccdc68) from Mus musculus (Mouse).